Reading from the N-terminus, the 82-residue chain is Toxin GTx1-15 (82 aa).

A signal peptide spans 1-21 (MKTSVVFVIAGLALLSVACYA). Residues 22-46 (SELKEQSSINEVLSTIFHFEQPEER) constitute a propeptide that is removed on maturation. 3 disulfide bridges follow: Cys-48/Cys-63, Cys-55/Cys-69, and Cys-62/Cys-76. Phe-80 is subject to Phenylalanine amide.

Belongs to the neurotoxin 10 (Hwtx-1) family. 08 (Gtx1-15) subfamily. As to expression, expressed by the venom gland.

It localises to the secreted. Potent voltage-gated sodium channel blocker. Potently inhibits the voltage-gated sodium channels Nav1.7/SCN9A (IC(50)=0.58-10 nM). Shows a moderate activity on Nav1.1/SCN1A (IC(50)=6 nM), Nav1.2/SCN2A (IC(50)=5-128 nM), Nav1.3/SCN3A (IC(50)=20.3-170 nM), and Nav1.6/SCN8A (IC(50)=17-20.1 nM). Shows an unclear inhibition of Nav1.4/SCN4A (IC(50)=200 nM to &gt;10 uM), Nav1.5/SCN5A (IC(50)=140 nM to &gt;10 uM) and Nav1.8/SCN10A (IC(50)=68-12200 nM). Weakly blocks the low voltage-gated calcium channels Cav3.1/CACNA1G (30% inhibition of the peak current by 9.8 nM of the toxin). It shows moderate affinity for lipid bilayers. The polypeptide is Toxin GTx1-15 (Grammostola rosea (Chilean rose tarantula)).